The chain runs to 439 residues: Xylose isomerase (439 aa).

Residues His101 and Asp104 contribute to the active site. Glu232, Glu268, His271, Asp296, Asp307, Asp309, and Asp339 together coordinate Mg(2+).

Belongs to the xylose isomerase family. In terms of assembly, homotetramer. Mg(2+) is required as a cofactor.

It is found in the cytoplasm. The catalysed reaction is alpha-D-xylose = alpha-D-xylulofuranose. The sequence is that of Xylose isomerase from Yersinia enterocolitica serotype O:8 / biotype 1B (strain NCTC 13174 / 8081).